A 336-amino-acid chain; its full sequence is Serpentine receptor class gamma-13 (336 aa).

Helical transmembrane passes span 32 to 52 (LKYIIQVTLLSINFILNFLII), 68 to 88 (FFIIYAADLIMGMYMSLSEIL), 93 to 113 (FIYVTLLCPILAPYFFTPSIF), 133 to 153 (VFLSFNRMTCVVFPVGYSAIW), 156 to 176 (ILTPIIIVLFVLPIGIIWNVL), 210 to 230 (FIVSLILIIVISGVTLYALLI), 246 to 266 (TMVLSLEFSFLSVIQIYFAFF), and 277 to 297 (LLRVMYFTYDLLNFSTTIIFI).

Belongs to the nematode receptor-like protein srg family.

Its subcellular location is the membrane. The protein is Serpentine receptor class gamma-13 (srg-13) of Caenorhabditis elegans.